An 877-amino-acid polypeptide reads, in one-letter code: Hopanoid transporter HpnN (877 aa).

Residues methionine 1–arginine 16 lie on the Cytoplasmic side of the membrane. A helical membrane pass occupies residues proline 17–arginine 37. Residues histidine 38–leucine 279 are Periplasmic-facing. A helical membrane pass occupies residues asparagine 280 to alanine 295. The Cytoplasmic portion of the chain corresponds to leucine 296 to lysine 299. Residues arginine 300 to methionine 323 traverse the membrane as a helical segment. The 127-residue stretch at isoleucine 302–leucine 428 folds into the SSD domain. The Periplasmic segment spans residues valine 324–valine 332. Residues alanine 333 to valine 351 form a helical membrane-spanning segment. The Cytoplasmic segment spans residues lysine 352–serine 373. Residues methionine 374–proline 394 traverse the membrane as a helical segment. Topologically, residues threonine 395–glycine 399 are periplasmic. The helical transmembrane segment at valine 400–leucine 426 threads the bilayer. Residues arginine 427 to arginine 452 lie on the Cytoplasmic side of the membrane. The chain crosses the membrane as a helical span at residues histidine 453–leucine 472. The Periplasmic segment spans residues alanine 473–serine 718. A helical transmembrane segment spans residues alanine 719 to leucine 739. Over arginine 740–glycine 743 the chain is Cytoplasmic. The helical transmembrane segment at aspartate 744–leucine 766 threads the bilayer. Residues glycine 767–asparagine 774 lie on the Periplasmic side of the membrane. A helical membrane pass occupies residues isoleucine 775–methionine 794. At alanine 795 to threonine 809 the chain is on the cytoplasmic side. The helical transmembrane segment at histidine 810–tryptophan 827 threads the bilayer. Topologically, residues leucine 828–serine 836 are periplasmic. Residues methionine 837 to valine 858 traverse the membrane as a helical segment. Residues leucine 859–glutamate 877 lie on the Cytoplasmic side of the membrane.

It belongs to the resistance-nodulation-cell division (RND) (TC 2.A.6) family. MmpL subfamily. As to quaternary structure, homodimer.

It is found in the cell inner membrane. Its function is as follows. Essential for hopanoid transport from the cytoplasmic to the outer membrane. Is capable of shuttling hopanoid lipids from the inner membrane to the periplasm, where they probably spontaneously insert to the inner leaflet of the outer membrane, strengthening the cell envelope. May be a proton-motive-force (PMF)-dependent transporter. Is critical for multidrug resistance and cell wall remodeling in Burkholderia. This Burkholderia multivorans (strain ATCC 17616 / 249) protein is Hopanoid transporter HpnN.